A 450-amino-acid chain; its full sequence is Probable glycine dehydrogenase (decarboxylating) subunit 1 (450 aa).

It belongs to the GcvP family. N-terminal subunit subfamily. The glycine cleavage system is composed of four proteins: P, T, L and H. In this organism, the P 'protein' is a heterodimer of two subunits.

The catalysed reaction is N(6)-[(R)-lipoyl]-L-lysyl-[glycine-cleavage complex H protein] + glycine + H(+) = N(6)-[(R)-S(8)-aminomethyldihydrolipoyl]-L-lysyl-[glycine-cleavage complex H protein] + CO2. Its function is as follows. The glycine cleavage system catalyzes the degradation of glycine. The P protein binds the alpha-amino group of glycine through its pyridoxal phosphate cofactor; CO(2) is released and the remaining methylamine moiety is then transferred to the lipoamide cofactor of the H protein. This is Probable glycine dehydrogenase (decarboxylating) subunit 1 from Brevibacillus brevis (strain 47 / JCM 6285 / NBRC 100599).